Here is a 264-residue protein sequence, read N- to C-terminus: Thymidylate synthase (264 aa).

DUMP is bound at residue arginine 21. Histidine 51 contributes to the (6R)-5,10-methylene-5,6,7,8-tetrahydrofolate binding site. 126–127 (RR) is a dUMP binding site. Cysteine 146 (nucleophile) is an active-site residue. DUMP-binding positions include 166–169 (RSAD), asparagine 177, and 207–209 (HLY). Position 169 (aspartate 169) interacts with (6R)-5,10-methylene-5,6,7,8-tetrahydrofolate. Alanine 263 is a (6R)-5,10-methylene-5,6,7,8-tetrahydrofolate binding site.

This sequence belongs to the thymidylate synthase family. Bacterial-type ThyA subfamily. In terms of assembly, homodimer.

It localises to the cytoplasm. It carries out the reaction dUMP + (6R)-5,10-methylene-5,6,7,8-tetrahydrofolate = 7,8-dihydrofolate + dTMP. It functions in the pathway pyrimidine metabolism; dTTP biosynthesis. Functionally, catalyzes the reductive methylation of 2'-deoxyuridine-5'-monophosphate (dUMP) to 2'-deoxythymidine-5'-monophosphate (dTMP) while utilizing 5,10-methylenetetrahydrofolate (mTHF) as the methyl donor and reductant in the reaction, yielding dihydrofolate (DHF) as a by-product. This enzymatic reaction provides an intracellular de novo source of dTMP, an essential precursor for DNA biosynthesis. This Legionella pneumophila (strain Paris) protein is Thymidylate synthase.